The following is a 264-amino-acid chain: Cancer/testis antigen 55 (264 aa).

The segment at 242-264 (SSSGFQDDGGLGRPKRERRSQSI) is disordered. Positions 254-264 (RPKRERRSQSI) are enriched in basic residues.

As to quaternary structure, interacts with GABARAP; this interaction may be important for GABARAP protein stability. Isoform 1 interacts with LAMP2; this interaction may be important for LAMP2 protein stability. As to expression, testis-specific. Expressed in spermatozoa (at protein level).

The protein resides in the cytoplasm. It is found in the cytoplasmic vesicle. Its subcellular location is the secretory vesicle. The protein localises to the acrosome. It localises to the cell projection. The protein resides in the cilium. It is found in the flagellum. In terms of biological role, plays a role in spermatogenesis, possibly acting in the regulation of the autophagy pathway. In Homo sapiens (Human), this protein is Cancer/testis antigen 55 (CT55).